A 69-amino-acid polypeptide reads, in one-letter code: Conotoxin Lp3.1 (69 aa).

A signal peptide spans 1-20 (MLKMGVLLFIFLVLFPLTTL). Positions 21 to 54 (ELDTDRPVERHAAIKQDLKPQERRGIRLHAPRDE) are excised as a propeptide. Disulfide bonds link Cys-55–Cys-67, Cys-56–Cys-65, and Cys-61–Cys-68.

It belongs to the conotoxin M superfamily. In terms of tissue distribution, expressed by the venom duct.

The protein localises to the secreted. This chain is Conotoxin Lp3.1, found in Conus leopardus (Leopard cone).